Reading from the N-terminus, the 281-residue chain is 2-dehydro-3-deoxyphosphooctonate aldolase (281 aa).

It belongs to the KdsA family.

Its subcellular location is the cytoplasm. The enzyme catalyses D-arabinose 5-phosphate + phosphoenolpyruvate + H2O = 3-deoxy-alpha-D-manno-2-octulosonate-8-phosphate + phosphate. It participates in carbohydrate biosynthesis; 3-deoxy-D-manno-octulosonate biosynthesis; 3-deoxy-D-manno-octulosonate from D-ribulose 5-phosphate: step 2/3. It functions in the pathway bacterial outer membrane biogenesis; lipopolysaccharide biosynthesis. The polypeptide is 2-dehydro-3-deoxyphosphooctonate aldolase (Ectopseudomonas mendocina (strain ymp) (Pseudomonas mendocina)).